The sequence spans 156 residues: uncharacterized protein (156 aa).

5 helical membrane-spanning segments follow: residues 7–29, 42–64, 69–88, 98–120, and 133–155; these read AQIS…SYFL, YFAL…PYLF, AVTG…AITS, AAIW…YPAL, and ALVL…ISRI.

The protein localises to the cell membrane. This is an uncharacterized protein from Pasteurella multocida (strain Pm70).